The primary structure comprises 539 residues: GMP synthase [glutamine-hydrolyzing] (539 aa).

A Glutamine amidotransferase type-1 domain is found at 4–202 (KILILDFGSQ…VLQIAGAKPD (199 aa)). The active-site Nucleophile is the C81. Catalysis depends on residues H176 and E178. The GMPS ATP-PPase domain occupies 203 to 395 (WIMKNHIEEA…LGLPPEMVYR (193 aa)). 230 to 236 (SGGVDSS) is a binding site for ATP.

In terms of assembly, homodimer.

The enzyme catalyses XMP + L-glutamine + ATP + H2O = GMP + L-glutamate + AMP + diphosphate + 2 H(+). It participates in purine metabolism; GMP biosynthesis; GMP from XMP (L-Gln route): step 1/1. Functionally, catalyzes the synthesis of GMP from XMP. This Burkholderia vietnamiensis (strain G4 / LMG 22486) (Burkholderia cepacia (strain R1808)) protein is GMP synthase [glutamine-hydrolyzing].